The sequence spans 429 residues: Probable M18 family aminopeptidase 2 (429 aa).

His-82, His-156, and His-401 together coordinate Zn(2+).

Belongs to the peptidase M18 family. Zn(2+) serves as cofactor.

In Pseudomonas putida (strain GB-1), this protein is Probable M18 family aminopeptidase 2.